Consider the following 142-residue polypeptide: Large ribosomal subunit protein bL21 (142 aa).

Basic residues predominate over residues 73 to 84 (KRRRQNSKRTRG). The interval 73 to 142 (KRRRQNSKRT…KAAAKAESAE (70 aa)) is disordered. Basic and acidic residues predominate over residues 107–125 (KAAEKKAPKADAAEGEAAK). The segment covering 126 to 135 (PKKAAPKKAA) has biased composition (basic residues).

The protein belongs to the bacterial ribosomal protein bL21 family. As to quaternary structure, part of the 50S ribosomal subunit. Contacts protein L20.

Functionally, this protein binds to 23S rRNA in the presence of protein L20. This is Large ribosomal subunit protein bL21 from Brucella canis (strain ATCC 23365 / NCTC 10854 / RM-666).